Reading from the N-terminus, the 134-residue chain is Large-conductance mechanosensitive channel (134 aa).

2 helical membrane passes run 16–36 and 81–101; these read VIDL…VTAL and GDFL…FIIV.

It belongs to the MscL family. In terms of assembly, homopentamer.

Its subcellular location is the cell inner membrane. Functionally, channel that opens in response to stretch forces in the membrane lipid bilayer. May participate in the regulation of osmotic pressure changes within the cell. The chain is Large-conductance mechanosensitive channel from Xylella fastidiosa (strain 9a5c).